We begin with the raw amino-acid sequence, 379 residues long: L-lactate dehydrogenase (379 aa).

An FMN hydroxy acid dehydrogenase domain is found at 1-379 (MIISASTDYR…IGRDSLVSLP (379 aa)). Residue tyrosine 24 participates in substrate binding. FMN is bound by residues serine 106 and glutamine 127. Tyrosine 129 is a substrate binding site. Position 155 (threonine 155) interacts with FMN. Arginine 164 is a binding site for substrate. Lysine 251 serves as a coordination point for FMN. The Proton acceptor role is filled by histidine 275. Arginine 278 contributes to the substrate binding site. 306-330 (DSGIRTGLDVVRMLALGADTVLLGR) contacts FMN.

The protein belongs to the FMN-dependent alpha-hydroxy acid dehydrogenase family. It depends on FMN as a cofactor.

It localises to the cell inner membrane. The enzyme catalyses (S)-lactate + A = pyruvate + AH2. Catalyzes the conversion of L-lactate to pyruvate. Is coupled to the respiratory chain. The sequence is that of L-lactate dehydrogenase from Stenotrophomonas maltophilia (strain K279a).